Consider the following 444-residue polypeptide: Methylenetetrahydrofolate--tRNA-(uracil-5-)-methyltransferase TrmFO (444 aa).

10 to 15 (GAGLAG) provides a ligand contact to FAD.

Belongs to the MnmG family. TrmFO subfamily. FAD is required as a cofactor.

It is found in the cytoplasm. It catalyses the reaction uridine(54) in tRNA + (6R)-5,10-methylene-5,6,7,8-tetrahydrofolate + NADH + H(+) = 5-methyluridine(54) in tRNA + (6S)-5,6,7,8-tetrahydrofolate + NAD(+). The enzyme catalyses uridine(54) in tRNA + (6R)-5,10-methylene-5,6,7,8-tetrahydrofolate + NADPH + H(+) = 5-methyluridine(54) in tRNA + (6S)-5,6,7,8-tetrahydrofolate + NADP(+). Functionally, catalyzes the folate-dependent formation of 5-methyl-uridine at position 54 (M-5-U54) in all tRNAs. This Streptococcus suis (strain 98HAH33) protein is Methylenetetrahydrofolate--tRNA-(uracil-5-)-methyltransferase TrmFO.